A 195-amino-acid chain; its full sequence is Guanylate kinase (195 aa).

Residues 10-189 enclose the Guanylate kinase-like domain; it reads GRLIVFSAPS…TVDAVATRIA (180 aa). Residue 17–24 coordinates ATP; that stretch reads APSGTGKS.

This sequence belongs to the guanylate kinase family.

The protein resides in the cytoplasm. It catalyses the reaction GMP + ATP = GDP + ADP. Essential for recycling GMP and indirectly, cGMP. The sequence is that of Guanylate kinase from Chlorobaculum tepidum (strain ATCC 49652 / DSM 12025 / NBRC 103806 / TLS) (Chlorobium tepidum).